The chain runs to 394 residues: Phosphoglycerate kinase (394 aa).

Substrate is bound by residues 21 to 23 (DFN), Arg-37, 60 to 63 (HLGR), Arg-119, and Arg-152. Residues Lys-202, Glu-324, and 350–353 (GGDS) each bind ATP.

This sequence belongs to the phosphoglycerate kinase family. As to quaternary structure, monomer.

It localises to the cytoplasm. The enzyme catalyses (2R)-3-phosphoglycerate + ATP = (2R)-3-phospho-glyceroyl phosphate + ADP. Its pathway is carbohydrate degradation; glycolysis; pyruvate from D-glyceraldehyde 3-phosphate: step 2/5. The chain is Phosphoglycerate kinase from Carboxydothermus hydrogenoformans (strain ATCC BAA-161 / DSM 6008 / Z-2901).